A 495-amino-acid chain; its full sequence is UDP-glycosyltransferase 1 (495 aa).

Histidine 24 acts as the Proton acceptor in catalysis. Histidine 24 contributes to the an anthocyanidin binding site. Catalysis depends on aspartate 129, which acts as the Charge relay. UDP-alpha-D-glucose contacts are provided by glutamine 358, histidine 373, tryptophan 376, asparagine 377, serine 378, and glutamate 381. Residue glycine 396 participates in an anthocyanidin binding. Residues aspartate 397 and glutamine 398 each contribute to the UDP-alpha-D-glucose site.

Belongs to the UDP-glycosyltransferase family.

It carries out the reaction oleanolate + UDP-alpha-D-glucose = oleanolate 3-O-beta-D-glucoside + UDP + H(+). Its function is as follows. Catalyzes the transfer of a glucose (Glc) moiety from UDP-Glc to the C-3 position of the oleanane sapogenins oleanolate and hederagenin. The monoglucosylated hederagenin 3-O-beta-D-glucoside is a feeding deterrent of the yellow-striped flea beetle (Phyllotreta nemorum). The polypeptide is UDP-glycosyltransferase 1 (Barbarea vulgaris (Yellow rocket)).